Here is a 512-residue protein sequence, read N- to C-terminus: Beta-glucosidase 44 (512 aa).

The signal sequence occupies residues 1–23 (MRHLSSPPWPLLLLLLLSSFTSG). Gln58 contacts a beta-D-glucoside. N-linked (GlcNAc...) asparagine glycosylation occurs at Asn86. A beta-D-glucoside is bound by residues His159 and 204–205 (NE). The active-site Proton donor is the Glu205. Cys224 and Cys231 are disulfide-bonded. N-linked (GlcNAc...) asparagine glycosylation is present at Asn230. A beta-D-glucoside-binding residues include Tyr347 and Glu419. Glu419 (nucleophile) is an active-site residue. Asn427 is a glycosylation site (N-linked (GlcNAc...) asparagine). Residues Trp466, 473–474 (EW), and Phe482 contribute to the a beta-D-glucoside site.

The protein belongs to the glycosyl hydrolase 1 family. In terms of assembly, homodimer.

It localises to the secreted. The catalysed reaction is Hydrolysis of terminal, non-reducing beta-D-glucosyl residues with release of beta-D-glucose.. Hydrolyzes p-nitrophenyl beta-D-glucoside, p-nitrophenyl beta-D-mannoside, cellobiose, 4-methylumbelliferyl-beta-D-glucoside, laminarin, amygdalin, esculin and gentiobiose. This chain is Beta-glucosidase 44, found in Arabidopsis thaliana (Mouse-ear cress).